A 957-amino-acid chain; its full sequence is MAAQKIRSANINGLPRCKSEGTLIDFSGVPDPSLSEVKVLSPSSLRIDNPASLENVKEVVAIKDYCPNNFTTLKFSKGEHLYVLDASGGDWWYAHNSTEMGYIPSSYVQPLNYRDSCLSDSGMIDGLLENVDEGVKELDLLGDWTDSFNQDSVKKSHNNPFLRPSVSNPFLNGPLVSQTHAADTENSVDLLLFDPLAPSHVIASETSTDMLVNLLPNTTPNKVAVAVKRDNSFFRSKRSYSLSELSVLQAKSEGPTTGSFFAGLKSPAPEQFQSREDFRTAWLNHRKLARSCHDLDLLGQNPGWGQTQPVETSIVCRLDSSGGAVQLPDTNISIHVPEKHVASGETQQISLKALLDPPLELNNDKCTTVSPVLEIKLSNMDVHCPLTLELRISVALGGNASALNMVGIKCLRSDAREGPYNPVTQIYMYGDTVQVKLDNLEPVMYVVMVAQGQGIVSPSSVWEYINKKVTVGLYGPKHIHPSFKAVLAIFGHDCAPKSLLVNEVGQQANNPAPVTLQLWGKQQFVLPKPQDVQLCLFSNMTNYRVDAGDQGKIVRGFQLKLGKVSRLIFPIICQDPDQLSDFTLRVQVRDEFGGVLSQYCVQTPRPLPKTGTKSTGPRRFLKKKELGKIVLSPLAITCKYPTFQDRPVTSLKYGKLLKTVVRQSKNPYLLEYKKGDVIGLLSEEKIRLKGQLWNKEWYIGYYQGKLGLVHAKNVLVVGKVKPSFFSGPELTTGLLLEQILRPCKFLTYIYASVRTLLMENIGSWRCFADALGYGNLPLSYFCRVELESETERVASVLEKLKEECNSEGKEKKSFQKELIMALLKIDCQGLVVRLIQDFVLLTTAVEVAARWRELSEKLARVSKQQMDGYEAPHRDRNGMLDSEAMWKPAYDFLLTWSAQIGESYRDVIQELHTGLDKMRSPITKRWKHLTGTLILVNSLDILRATAFSTEAPEDCII.

An SH3 1 domain is found at 54-113; sequence ENVKEVVAIKDYCPNNFTTLKFSKGEHLYVLDASGGDWWYAHNSTEMGYIPSSYVQPLNY. The ZU5 domain maps to 312–449; it reads TSIVCRLDSS…LEPVMYVVMV (138 aa). Residues 649 to 719 enclose the SH3 2 domain; sequence TSLKYGKLLK…HAKNVLVVGK (71 aa).

As to quaternary structure, homodimer or homooligomer.

Its subcellular location is the membrane. It is found in the clathrin-coated pit. The protein resides in the cytoplasmic vesicle. The protein localises to the clathrin-coated vesicle. It localises to the nucleus. Its function is as follows. Possible role in regulating endocytosis of the transferrin receptor at the plasma membrane. Alternatively, may function as a negative regulator of the amino acid-induced TOR signaling by inhibiting the formation of active Rag GTPase complexes. Preferentially binds inactive Rag GTPase complexes and prevents their interaction with the mTORC1 complex inhibiting its relocalization to lysosomes and its activation. Thereby, may indirectly regulate cell growth, proliferation and autophagy. The polypeptide is SH3 domain-binding protein 4-A (sh3bp4-a) (Xenopus laevis (African clawed frog)).